A 427-amino-acid polypeptide reads, in one-letter code: Serine--tRNA ligase (427 aa).

233 to 235 (TAE) provides a ligand contact to L-serine. An ATP-binding site is contributed by 264–266 (RSE). Glu-287 is a binding site for L-serine. ATP is bound at residue 351 to 354 (EISS). Ser-386 contributes to the L-serine binding site.

This sequence belongs to the class-II aminoacyl-tRNA synthetase family. Type-1 seryl-tRNA synthetase subfamily. As to quaternary structure, homodimer. The tRNA molecule binds across the dimer.

The protein localises to the cytoplasm. The catalysed reaction is tRNA(Ser) + L-serine + ATP = L-seryl-tRNA(Ser) + AMP + diphosphate + H(+). It catalyses the reaction tRNA(Sec) + L-serine + ATP = L-seryl-tRNA(Sec) + AMP + diphosphate + H(+). Its pathway is aminoacyl-tRNA biosynthesis; selenocysteinyl-tRNA(Sec) biosynthesis; L-seryl-tRNA(Sec) from L-serine and tRNA(Sec): step 1/1. Functionally, catalyzes the attachment of serine to tRNA(Ser). Is also able to aminoacylate tRNA(Sec) with serine, to form the misacylated tRNA L-seryl-tRNA(Sec), which will be further converted into selenocysteinyl-tRNA(Sec). This is Serine--tRNA ligase from Dechloromonas aromatica (strain RCB).